Reading from the N-terminus, the 185-residue chain is Hypoxanthine/guanine phosphoribosyltransferase (185 aa).

This sequence belongs to the purine/pyrimidine phosphoribosyltransferase family. Archaeal HPRT subfamily. As to quaternary structure, homodimer.

The protein resides in the cytoplasm. The catalysed reaction is IMP + diphosphate = hypoxanthine + 5-phospho-alpha-D-ribose 1-diphosphate. The enzyme catalyses GMP + diphosphate = guanine + 5-phospho-alpha-D-ribose 1-diphosphate. Its pathway is purine metabolism; IMP biosynthesis via salvage pathway; IMP from hypoxanthine: step 1/1. Catalyzes a salvage reaction resulting in the formation of IMP that is energically less costly than de novo synthesis. This Methanococcus maripaludis (strain C5 / ATCC BAA-1333) protein is Hypoxanthine/guanine phosphoribosyltransferase.